A 102-amino-acid chain; its full sequence is Urease subunit beta (102 aa).

This sequence belongs to the urease beta subunit family. In terms of assembly, heterotrimer of UreA (gamma), UreB (beta) and UreC (alpha) subunits. Three heterotrimers associate to form the active enzyme.

It localises to the cytoplasm. The catalysed reaction is urea + 2 H2O + H(+) = hydrogencarbonate + 2 NH4(+). The protein operates within nitrogen metabolism; urea degradation; CO(2) and NH(3) from urea (urease route): step 1/1. The sequence is that of Urease subunit beta from Pseudomonas savastanoi pv. phaseolicola (strain 1448A / Race 6) (Pseudomonas syringae pv. phaseolicola (strain 1448A / Race 6)).